Consider the following 351-residue polypeptide: Thiamine-phosphate synthase (351 aa).

Residues M1–E128 form a unknown region. The segment at I129–N351 is thiamine-phosphate synthase. Residues Q180 to K184 and N212 each bind 4-amino-2-methyl-5-(diphosphooxymethyl)pyrimidine. Residues D213 and D232 each contribute to the Mg(2+) site. S251 contacts 4-amino-2-methyl-5-(diphosphooxymethyl)pyrimidine. T277–T279 lines the 2-[(2R,5Z)-2-carboxy-4-methylthiazol-5(2H)-ylidene]ethyl phosphate pocket. 4-amino-2-methyl-5-(diphosphooxymethyl)pyrimidine is bound at residue K280. G307 provides a ligand contact to 2-[(2R,5Z)-2-carboxy-4-methylthiazol-5(2H)-ylidene]ethyl phosphate.

The protein belongs to the thiamine-phosphate synthase family. Mg(2+) serves as cofactor.

The enzyme catalyses 2-[(2R,5Z)-2-carboxy-4-methylthiazol-5(2H)-ylidene]ethyl phosphate + 4-amino-2-methyl-5-(diphosphooxymethyl)pyrimidine + 2 H(+) = thiamine phosphate + CO2 + diphosphate. The catalysed reaction is 2-(2-carboxy-4-methylthiazol-5-yl)ethyl phosphate + 4-amino-2-methyl-5-(diphosphooxymethyl)pyrimidine + 2 H(+) = thiamine phosphate + CO2 + diphosphate. It carries out the reaction 4-methyl-5-(2-phosphooxyethyl)-thiazole + 4-amino-2-methyl-5-(diphosphooxymethyl)pyrimidine + H(+) = thiamine phosphate + diphosphate. It participates in cofactor biosynthesis; thiamine diphosphate biosynthesis; thiamine phosphate from 4-amino-2-methyl-5-diphosphomethylpyrimidine and 4-methyl-5-(2-phosphoethyl)-thiazole: step 1/1. Condenses 4-methyl-5-(beta-hydroxyethyl)thiazole monophosphate (THZ-P) and 2-methyl-4-amino-5-hydroxymethyl pyrimidine pyrophosphate (HMP-PP) to form thiamine monophosphate (TMP). The protein is Thiamine-phosphate synthase of Prochlorococcus marinus (strain AS9601).